The sequence spans 286 residues: P2R1A-PPP2R2A-interacting phosphatase regulator 1 (286 aa).

The interval 1-46 (MAQEKMELDLELPAGTGASPAEGGGPGSGGLRRSNSAPLIHGLSDS) is disordered. Position 34 is a phosphoserine (Ser34). Ser36 bears the Phosphoserine; by CHEK1 mark. Residues Ser44, Ser47, Ser61, and Ser75 each carry the phosphoserine modification. Lys88 is covalently cross-linked (Glycyl lysine isopeptide (Lys-Gly) (interchain with G-Cter in SUMO1)). Residues Ser142 and Ser146 each carry the phosphoserine modification. Residue Thr148 is modified to Phosphothreonine. A disordered region spans residues 166–187 (SNGLPPSPIPSPTTRFTTRRSQ). A compositionally biased stretch (low complexity) spans 177-187 (PTTRFTTRRSQ). Phosphoserine occurs at positions 186 and 188. Positions 238 to 286 (VSSDTLDGNSSSAGSSCNSPAKVSTTTDSPVSPAQAASPFIPVDELSSK) are disordered. Residues 245-256 (GNSSSAGSSCNS) are compositionally biased toward low complexity. The segment covering 258-269 (AKVSTTTDSPVS) has biased composition (polar residues). Residues Ser266, Ser269, and Ser275 each carry the phosphoserine modification.

The protein belongs to the FAM122 family. In terms of assembly, interacts with PPP2CA and PPP2R1A. Interacts (via its N-terminus) with PPP2R2A; the interaction is direct and this interaction inhibits PP2A activity. The CHEK1-mediated Ser-36 phosphorylated form interacts with 14-3-3 proteins. In terms of processing, CHEK1-mediated phosphorylation at Ser-36 negatively regulates its ability to inhibit serine/threonine-protein phosphatase 2A (PP2A) activity. Phosphorylation leads to its release from the PP2A complex and its sequestration by 14-3-3 proteins in the cytoplasm resulting in its inability to translocate to the nucleus, where it otherwise inhibits PP2A.

The protein resides in the nucleus. It localises to the cytoplasm. In terms of biological role, acts as an inhibitor of serine/threonine-protein phosphatase 2A (PP2A) activity. Inhibits PP2A activity by blocking the substrate binding site on PPP2R2A and the active site of PPP2CA. Potentiates ubiquitin-mediated proteasomal degradation of serine/threonine-protein phosphatase 2A catalytic subunit alpha (PPP2CA). Inhibits PP2A-mediated dephosphorylation of WEE1, promoting ubiquitin-mediated proteolysis of WEE1, thereby releasing G2/M checkpoint. The chain is P2R1A-PPP2R2A-interacting phosphatase regulator 1 from Rattus norvegicus (Rat).